Reading from the N-terminus, the 471-residue chain is Glutamate--tRNA ligase (471 aa).

Positions 9–19 (PSPTGYLHVGG) match the 'HIGH' region motif. Positions 98, 100, 125, and 127 each coordinate Zn(2+). Positions 237–241 (KLSKR) match the 'KMSKS' region motif. Lys-240 lines the ATP pocket.

It belongs to the class-I aminoacyl-tRNA synthetase family. Glutamate--tRNA ligase type 1 subfamily. Monomer. Zn(2+) serves as cofactor.

The protein resides in the cytoplasm. The enzyme catalyses tRNA(Glu) + L-glutamate + ATP = L-glutamyl-tRNA(Glu) + AMP + diphosphate. In terms of biological role, catalyzes the attachment of glutamate to tRNA(Glu) in a two-step reaction: glutamate is first activated by ATP to form Glu-AMP and then transferred to the acceptor end of tRNA(Glu). The protein is Glutamate--tRNA ligase of Escherichia coli (strain ATCC 8739 / DSM 1576 / NBRC 3972 / NCIMB 8545 / WDCM 00012 / Crooks).